A 227-amino-acid polypeptide reads, in one-letter code: MRQRFVLDTTAITDAGLRIKEGYESLCESAAEVLDLIALARLKLDISCYIPYPSVYTELTSFLKRYGCDEEIFTKLDTWLVKKTPNRYEVKIPAAIFYEYIITVRQKMNRGRRLAEEYILESSAITAKLEDKSKIEEEIGALISKFRDKYRAVMRQGILDSAPDLDVLLLAKELEAGVVSSDAGIRKWSERLGLRFVEAAKFPRMLKEYLKLMGSKDIVGWFESEED.

The protein belongs to the HARP family.

It carries out the reaction Endonucleolytic cleavage of RNA, removing 5'-extranucleotides from tRNA precursor.. Functionally, RNA-free RNase P that catalyzes the removal of the 5'-leader sequence from pre-tRNA to produce the mature 5'-terminus. This Archaeoglobus fulgidus (strain ATCC 49558 / DSM 4304 / JCM 9628 / NBRC 100126 / VC-16) protein is RNA-free ribonuclease P.